Reading from the N-terminus, the 741-residue chain is MKTIQGKSPGRWYSRGMLLAAMAASGVIGLAACGGGNDGNSAGNNGNAGGNGNNNGNNNGNTVSNTKPSFVGTVTVRRFDGVSDDLLTAGLGASGLASATAPAVANAVAPTAAELRRLTIYNNYRALIDTSAKGGYGTLYGPNVDADGNVTSGNGMVAGAEYVAYPDDGSGQQNVVLLVQIPDAFDAAHPCIITATSSGSRGIYGAISTGEWGLKRKCAVAYTDKGTGAGPHDLATDTVPLQDGTRTTRTLAGNTAQFAAPLAASRLAAFNVATPNRLAFKHAHSQRNPEKDWGLFTLQAVQFAFWAINDKLGISSGQTVSQLPVRPGNTIVIASSVSNGGGAAIAAAEQDTGNLIDGVAVGEPALSLPSSINVQVKRGGASLPINGKPLFDYVSYANEFRLCAALSASVASAPTQAYFGAALGWPASVQANRCAALHAKGLLSSTTTAAQADEALQKMRDYGWEPESDLLHASMAYFEIDPSVATTFGNALARASVFDNLCDLSFAAVDGSFHPATMNATVLAQLAATGNGVPPTTGVQLINNIAQGGAAQSRQSIDSSGTQAANLDGALCLRNLLSGSDAASQALQLGLSQTLRSGNLRGKPALIVQGRNDALLPVNHGARPYLGLNAQVDGSSKLSYIEVTNAQHFDGFIDLLPGYDSLFVPLAVYEQRALDAVYANLRSGTPLPPSQVVRTTPRGGAAGAAPPITAANVPNFTMTPAAGDRIQVSVSGGVATVSVPN.

An N-terminal signal peptide occupies residues 1-23 (MKTIQGKSPGRWYSRGMLLAAMA). Positions 45-68 (NGNAGGNGNNNGNNNGNTVSNTKP) are disordered. Residue Ser338 is the Charge relay system of the active site.

Belongs to the D-(-)-3-hydroxybutyrate oligomer hydrolase family.

It localises to the secreted. It catalyses the reaction (3R)-hydroxybutanoate dimer + H2O = 2 (R)-3-hydroxybutanoate + H(+). The protein operates within lipid metabolism; butanoate metabolism. Participates in the degradation of poly-3-hydroxybutyrate (PHB). It works downstream of poly(3-hydroxybutyrate) depolymerase, hydrolyzing D(-)-3-hydroxybutyrate oligomers of various length (3HB-oligomers) into 3HB-monomers. This chain is D-(-)-3-hydroxybutyrate oligomer hydrolase, found in Ralstonia pickettii (Burkholderia pickettii).